Reading from the N-terminus, the 158-residue chain is Large ribosomal subunit protein bL35m (158 aa).

Belongs to the bacterial ribosomal protein bL35 family.

The protein resides in the mitochondrion. The polypeptide is Large ribosomal subunit protein bL35m (mrpl-35) (Caenorhabditis elegans).